The primary structure comprises 105 residues: ATP synthase subunit c (105 aa).

Transmembrane regions (helical) follow at residues 32-52 (SILG…IGMG) and 78-98 (VAMA…IIAI).

The protein belongs to the ATPase C chain family. In terms of assembly, F-type ATPases have 2 components, F(1) - the catalytic core - and F(0) - the membrane proton channel. F(1) has five subunits: alpha(3), beta(3), gamma(1), delta(1), epsilon(1). F(0) has three main subunits: a(1), b(2) and c(10-14). The alpha and beta chains form an alternating ring which encloses part of the gamma chain. F(1) is attached to F(0) by a central stalk formed by the gamma and epsilon chains, while a peripheral stalk is formed by the delta and b chains.

The protein localises to the cell inner membrane. F(1)F(0) ATP synthase produces ATP from ADP in the presence of a proton or sodium gradient. F-type ATPases consist of two structural domains, F(1) containing the extramembraneous catalytic core and F(0) containing the membrane proton channel, linked together by a central stalk and a peripheral stalk. During catalysis, ATP synthesis in the catalytic domain of F(1) is coupled via a rotary mechanism of the central stalk subunits to proton translocation. In terms of biological role, key component of the F(0) channel; it plays a direct role in translocation across the membrane. A homomeric c-ring of between 10-14 subunits forms the central stalk rotor element with the F(1) delta and epsilon subunits. The sequence is that of ATP synthase subunit c from Helicobacter pylori (strain ATCC 700392 / 26695) (Campylobacter pylori).